The following is a 569-amino-acid chain: Proline--tRNA ligase (569 aa).

It belongs to the class-II aminoacyl-tRNA synthetase family. ProS type 1 subfamily. Homodimer.

The protein resides in the cytoplasm. It catalyses the reaction tRNA(Pro) + L-proline + ATP = L-prolyl-tRNA(Pro) + AMP + diphosphate. In terms of biological role, catalyzes the attachment of proline to tRNA(Pro) in a two-step reaction: proline is first activated by ATP to form Pro-AMP and then transferred to the acceptor end of tRNA(Pro). As ProRS can inadvertently accommodate and process non-cognate amino acids such as alanine and cysteine, to avoid such errors it has two additional distinct editing activities against alanine. One activity is designated as 'pretransfer' editing and involves the tRNA(Pro)-independent hydrolysis of activated Ala-AMP. The other activity is designated 'posttransfer' editing and involves deacylation of mischarged Ala-tRNA(Pro). The misacylated Cys-tRNA(Pro) is not edited by ProRS. The chain is Proline--tRNA ligase from Campylobacter jejuni (strain RM1221).